The primary structure comprises 608 residues: Probable Ufm1-specific protease 2 (608 aa).

Active-site residues include cysteine 441, aspartate 565, and histidine 567.

This sequence belongs to the peptidase C78 family.

Functionally, thiol protease which recognizes and hydrolyzes the peptide bond at the C-terminal Gly of UFM1, a ubiquitin-like modifier protein bound to a number of target proteins. Does not hydrolyze SUMO1 or ISG15 ubiquitin-like proteins. This is Probable Ufm1-specific protease 2 from Drosophila pseudoobscura pseudoobscura (Fruit fly).